A 185-amino-acid chain; its full sequence is Ribosome-recycling factor (185 aa).

The protein belongs to the RRF family.

It localises to the cytoplasm. Its function is as follows. Responsible for the release of ribosomes from messenger RNA at the termination of protein biosynthesis. May increase the efficiency of translation by recycling ribosomes from one round of translation to another. The polypeptide is Ribosome-recycling factor (Aliivibrio fischeri (strain MJ11) (Vibrio fischeri)).